A 299-amino-acid polypeptide reads, in one-letter code: 4-hydroxy-3-methylbut-2-enyl diphosphate reductase (299 aa).

C12 is a [4Fe-4S] cluster binding site. 2 residues coordinate (2E)-4-hydroxy-3-methylbut-2-enyl diphosphate: H42 and H88. Dimethylallyl diphosphate contacts are provided by H42 and H88. Isopentenyl diphosphate-binding residues include H42 and H88. [4Fe-4S] cluster is bound at residue C110. H138 contributes to the (2E)-4-hydroxy-3-methylbut-2-enyl diphosphate binding site. H138 is a dimethylallyl diphosphate binding site. Isopentenyl diphosphate is bound at residue H138. Residue E140 is the Proton donor of the active site. T177 is a binding site for (2E)-4-hydroxy-3-methylbut-2-enyl diphosphate. C205 contacts [4Fe-4S] cluster. (2E)-4-hydroxy-3-methylbut-2-enyl diphosphate contacts are provided by S233, N235, and S277. Residues S233, N235, and S277 each coordinate dimethylallyl diphosphate. Positions 233, 235, and 277 each coordinate isopentenyl diphosphate.

Belongs to the IspH family. Requires [4Fe-4S] cluster as cofactor.

The catalysed reaction is isopentenyl diphosphate + 2 oxidized [2Fe-2S]-[ferredoxin] + H2O = (2E)-4-hydroxy-3-methylbut-2-enyl diphosphate + 2 reduced [2Fe-2S]-[ferredoxin] + 2 H(+). It catalyses the reaction dimethylallyl diphosphate + 2 oxidized [2Fe-2S]-[ferredoxin] + H2O = (2E)-4-hydroxy-3-methylbut-2-enyl diphosphate + 2 reduced [2Fe-2S]-[ferredoxin] + 2 H(+). Its pathway is isoprenoid biosynthesis; dimethylallyl diphosphate biosynthesis; dimethylallyl diphosphate from (2E)-4-hydroxy-3-methylbutenyl diphosphate: step 1/1. It functions in the pathway isoprenoid biosynthesis; isopentenyl diphosphate biosynthesis via DXP pathway; isopentenyl diphosphate from 1-deoxy-D-xylulose 5-phosphate: step 6/6. Functionally, catalyzes the conversion of 1-hydroxy-2-methyl-2-(E)-butenyl 4-diphosphate (HMBPP) into a mixture of isopentenyl diphosphate (IPP) and dimethylallyl diphosphate (DMAPP). Acts in the terminal step of the DOXP/MEP pathway for isoprenoid precursor biosynthesis. The polypeptide is 4-hydroxy-3-methylbut-2-enyl diphosphate reductase (Malacoplasma penetrans (strain HF-2) (Mycoplasma penetrans)).